The sequence spans 311 residues: Fluoride export protein 1 (311 aa).

Over 1 to 6 (MLLTQS) the chain is Cytoplasmic. The helical transmembrane segment at 7-25 (YFCIMSMLGTLARLGLTAL) threads the bilayer. Residues 26–29 (NTYP) are Extracellular-facing. A helical transmembrane segment spans residues 30-50 (GAPFSGLLWVQFVGCVIMGFC). Topologically, residues 51–65 (QTESVFFPRPKHNAT) are cytoplasmic. A helical membrane pass occupies residues 66–86 (FLLAITTGFCGSLTTFSSWML). Residues 87–106 (QMFTGMANLDPFERRGRGYS) are Extracellular-facing. Residues 107–127 (FLSVVSDFMVTMCIAMSSLIW) traverse the membrane as a helical segment. Over 128-154 (GKQIGKTTGQWRIGKVAFAWPIPAHTH) the chain is Cytoplasmic. A helical membrane pass occupies residues 155–175 (IVVRVLLLLLSICFFVGAAFY). Residues 176 to 186 (TAYTTNVTHRG) lie on the Extracellular side of the membrane. Asn-181 carries an N-linked (GlcNAc...) asparagine glycan. A helical transmembrane segment spans residues 187–207 (IGFSLIFSPFAALTRLYLARF). Residues 208-212 (LNSPQ) are Cytoplasmic-facing. A helical transmembrane segment spans residues 213 to 233 (YFIPYGTLCANVFATLLLSIM). At 234–250 (YMIPQITHCTPVSRSVM) the chain is on the extracellular side. The chain crosses the membrane as a helical span at residues 251–268 (YGIQNGFCAVLSTLSTFS). At 269–278 (NELHTMPIKR) the chain is on the cytoplasmic side. A helical transmembrane segment spans residues 279–299 (AYIYCIISVAISFSICVIVDG). Residues 300 to 311 (ATAWGHGYTEKY) are Extracellular-facing.

This sequence belongs to the fluoride channel Fluc/FEX (TC 1.A.43) family.

The protein resides in the cell membrane. The catalysed reaction is fluoride(in) = fluoride(out). Its function is as follows. Fluoride channel required for the rapid expulsion of cytoplasmic fluoride. This Schizosaccharomyces pombe (strain 972 / ATCC 24843) (Fission yeast) protein is Fluoride export protein 1 (fex1).